A 300-amino-acid polypeptide reads, in one-letter code: ATP-dependent (S)-NAD(P)H-hydrate dehydratase (300 aa).

In terms of domain architecture, YjeF C-terminal spans 14-293 (LLTLFKTIVP…NEISAVFRSD (280 aa)). (6S)-NADPHX-binding positions include G114 and 167 to 173 (NAMEFRR). ATP-binding positions include 198-202 (KGVND) and 219-228 (GSGRRCGGQG). A (6S)-NADPHX-binding site is contributed by D229.

The protein belongs to the NnrD/CARKD family. Mg(2+) is required as a cofactor.

The enzyme catalyses (6S)-NADHX + ATP = ADP + phosphate + NADH + H(+). The catalysed reaction is (6S)-NADPHX + ATP = ADP + phosphate + NADPH + H(+). Its function is as follows. Catalyzes the dehydration of the S-form of NAD(P)HX at the expense of ATP, which is converted to ADP. Together with NAD(P)HX epimerase, which catalyzes the epimerization of the S- and R-forms, the enzyme allows the repair of both epimers of NAD(P)HX, a damaged form of NAD(P)H that is a result of enzymatic or heat-dependent hydration. In Drosophila pseudoobscura pseudoobscura (Fruit fly), this protein is ATP-dependent (S)-NAD(P)H-hydrate dehydratase.